The sequence spans 416 residues: Probable intermembrane transport protein HI_1671 (416 aa).

A run of 8 helical transmembrane segments spans residues 62-82 (ILILMPFSLNYPLLSLHLLGI), 107-127 (IFICAVVMPITFALLVIMLWL), 138-158 (VLLFLGYIKAWVMFDVYLVAL), 172-192 (EINIYLIPFIFTALLTTLLFI), 263-283 (LIAGIIMLFPANLLPISGIYL), 306-326 (FVAFVVFFASIFVPISKIFIM), 347-367 (LLHLVHFVGRWSMLDLFVLAL), and 377-397 (IINFTVGPGAFYFGAAVFCTM).

Belongs to the PqiA family.

Its subcellular location is the cell inner membrane. The protein is Probable intermembrane transport protein HI_1671 of Haemophilus influenzae (strain ATCC 51907 / DSM 11121 / KW20 / Rd).